We begin with the raw amino-acid sequence, 205 residues long: Tegument protein UL51 homolog (205 aa).

Residue Cys-4 is the site of S-palmitoyl cysteine; by host attachment.

This sequence belongs to the herpesviridae UL51 family. As to quaternary structure, oligomerizes. Interacts with U75; this interaction mediates U75 incorporation to virions. Phosphorylated. Post-translationally, palmitoylation is necessary for Golgi localization.

It localises to the virion tegument. The protein localises to the host cytoplasm. Its subcellular location is the host Golgi apparatus. Functionally, plays several roles during the time course of infection, including egress of virus particles from the perinuclear space and secondary envelopment of cytoplasmic capsids that bud into specific trans-Golgi network (TGN)-derived membranes. This chain is Tegument protein UL51 homolog (U44), found in Homo sapiens (Human).